Reading from the N-terminus, the 316-residue chain is Glycerol-3-phosphate dehydrogenase [NAD(P)+] (316 aa).

NADPH-binding residues include S14, F15, R35, and K109. Sn-glycerol 3-phosphate contacts are provided by K109 and G137. A141 lines the NADPH pocket. The sn-glycerol 3-phosphate site is built by K192, D248, S258, R259, and N260. K192 (proton acceptor) is an active-site residue. R259 contacts NADPH. L283 and E285 together coordinate NADPH.

It belongs to the NAD-dependent glycerol-3-phosphate dehydrogenase family.

It is found in the cytoplasm. It carries out the reaction sn-glycerol 3-phosphate + NAD(+) = dihydroxyacetone phosphate + NADH + H(+). The catalysed reaction is sn-glycerol 3-phosphate + NADP(+) = dihydroxyacetone phosphate + NADPH + H(+). It functions in the pathway membrane lipid metabolism; glycerophospholipid metabolism. Catalyzes the reduction of the glycolytic intermediate dihydroxyacetone phosphate (DHAP) to sn-glycerol 3-phosphate (G3P), the key precursor for phospholipid synthesis. The sequence is that of Glycerol-3-phosphate dehydrogenase [NAD(P)+] from Rickettsia prowazekii (strain Madrid E).